The following is a 373-amino-acid chain: Ras association domain-containing protein 7 (373 aa).

In terms of domain architecture, Ras-associating spans 6 to 89; it reads AAMELKVWVD…VQFVLRRTGP (84 aa). The segment at 122–150 is disordered; sequence CEPRKTLTPEPAPSLSRPGPAAPVTPTPG. Coiled coils occupy residues 175–227 and 248–297; these read WEQE…AAEA and QERQ…QFIQ. The tract at residues 300-356 is disordered; it reads GAALPPPPRPDRGPPGTQGPLPPAREESLLGAPSESHAGAQPRPRGGPHDAELLEVA.

Interacts with MAP2K7 and GTP-bound NRAS. Polyubiquitinated and degraded by the proteasome upon prolonged stress stimuli.

It is found in the cytoplasm. The protein resides in the cytoskeleton. It localises to the microtubule organizing center. The protein localises to the centrosome. Negatively regulates stress-induced JNK activation and apoptosis by promoting MAP2K7 phosphorylation and inhibiting its ability to activate JNK. Following prolonged stress, anti-apoptotic effect stops because of degradation of RASSF7 protein via the ubiquitin-proteasome pathway. Required for the activation of AURKB and chromosomal congression during mitosis where it stimulates microtubule polymerization. The sequence is that of Ras association domain-containing protein 7 (RASSF7) from Homo sapiens (Human).